Here is a 470-residue protein sequence, read N- to C-terminus: Nuclear receptor ROR-beta (470 aa).

Residues 18–93 constitute a DNA-binding region (nuclear receptor); sequence VIPCKICGDK…LGMSRDAVKF (76 aa). 2 consecutive NR C4-type zinc fingers follow at residues 21–41 and 57–81; these read CKICGDKSSGIHYGVITCEGC and CPRQRNCLIDRTNRNRCQHCRLQKC. Residues 104–117 show a composition bias toward basic and acidic residues; it reads LYAEVQKHQQRLQE. Residues 104-127 are disordered; it reads LYAEVQKHQQRLQEQRQQQSGEAE. The 239-residue stretch at 222–460 folds into the NR LBD domain; the sequence is EIDRIAQNII…TLFPPLYKEL (239 aa). Positions 456–461 match the AF-2 motif; sequence LYKELF.

Belongs to the nuclear hormone receptor family. NR1 subfamily. In terms of assembly, monomer. Interacts with CRX.

The protein resides in the nucleus. It localises to the nucleoplasm. In terms of biological role, nuclear receptor that binds DNA as a monomer to ROR response elements (RORE) containing a single core motif half-site 5'-AGGTCA-3' preceded by a short A-T-rich sequence. Considered to have intrinsic transcriptional activity, have some natural ligands such as all-trans retinoic acid (ATRA) and other retinoids which act as inverse agonists repressing the transcriptional activity. Required for normal postnatal development of rod and cone photoreceptor cells. Modulates rod photoreceptors differentiation at least by inducing the transcription factor NRL-mediated pathway. In cone photoreceptor cells, regulates transcription of OPN1SW. Involved in the regulation of the period length and stability of the circadian rhythm. May control cytoarchitectural patterning of neocortical neurons during development. May act in a dose-dependent manner to regulate barrel formation upon innervation of layer IV neurons by thalamocortical axons. May play a role in the suppression of osteoblastic differentiation through the inhibition of RUNX2 transcriptional activity. Isoform 1 is critical for hindlimb motor control and for the differentiation of amacrine and horizontal cells in the retina. Regulates the expression of PTF1A synergistically with FOXN4. The protein is Nuclear receptor ROR-beta (RORB) of Homo sapiens (Human).